The chain runs to 538 residues: Serine/threonine-protein phosphatase 5 (538 aa).

TPR repeat units lie at residues 13–46, 48–80, and 81–114; these read AEEF…NSNN, VYWA…DSRY, and SKGY…SPND. Helical transmembrane passes span 163 to 183 and 185 to 205; these read SSMP…VVAV and GFAT…TFWW. Mn(2+) contacts are provided by Asp282, His284, Asp311, and Asn343. His344 serves as the catalytic Proton donor. 2 residues coordinate Mn(2+): His392 and His467.

It belongs to the PPP phosphatase family. PP-5 (PP-T) subfamily. Interacts with PHYA and PHYB, mostly when they are phosphorylated and in Pfr forms. Mn(2+) is required as a cofactor.

It is found in the endoplasmic reticulum membrane. The protein resides in the nucleus membrane. Its subcellular location is the cytoplasm. The protein localises to the nucleus. It localises to the nucleoplasm. It is found in the nucleus speckle. It catalyses the reaction O-phospho-L-seryl-[protein] + H2O = L-seryl-[protein] + phosphate. The catalysed reaction is O-phospho-L-threonyl-[protein] + H2O = L-threonyl-[protein] + phosphate. Activated by arachidonic acid (AA). In terms of biological role, isoform 2 dephosphorylates phosphorylated phytochromes, with a preference toward Pfr forms, and enhances phytochrome-mediated photoresponses, probably by enhancing their stability and their binding affinity for light signal transducers such as NDPK2. Can use para-nitrophenylphosphate (pNPP) as substrate. The chain is Serine/threonine-protein phosphatase 5 (PAPP5) from Arabidopsis thaliana (Mouse-ear cress).